The primary structure comprises 259 residues: Thiazole synthase (259 aa).

Catalysis depends on Lys-99, which acts as the Schiff-base intermediate with DXP. Residues Gly-160, 186–187 (AG), and 208–209 (NT) each bind 1-deoxy-D-xylulose 5-phosphate.

It belongs to the ThiG family. As to quaternary structure, homotetramer. Forms heterodimers with either ThiH or ThiS.

It is found in the cytoplasm. The catalysed reaction is [ThiS sulfur-carrier protein]-C-terminal-Gly-aminoethanethioate + 2-iminoacetate + 1-deoxy-D-xylulose 5-phosphate = [ThiS sulfur-carrier protein]-C-terminal Gly-Gly + 2-[(2R,5Z)-2-carboxy-4-methylthiazol-5(2H)-ylidene]ethyl phosphate + 2 H2O + H(+). The protein operates within cofactor biosynthesis; thiamine diphosphate biosynthesis. In terms of biological role, catalyzes the rearrangement of 1-deoxy-D-xylulose 5-phosphate (DXP) to produce the thiazole phosphate moiety of thiamine. Sulfur is provided by the thiocarboxylate moiety of the carrier protein ThiS. In vitro, sulfur can be provided by H(2)S. This Porphyromonas gingivalis (strain ATCC BAA-308 / W83) protein is Thiazole synthase.